A 356-amino-acid chain; its full sequence is GATA zinc finger domain-containing protein 17 (356 aa).

Residues 91 to 119 (LKEFDALEASLNAELECLELQYSSDTSEL) adopt a coiled-coil conformation. Low complexity predominate over residues 158–188 (TASTSTSTPTNTTTTTTTTSNSLTKNNNSAL). A disordered region spans residues 158 to 294 (TASTSTSTPT…DITEESKVKE (137 aa)). The span at 206–228 (SSDDEEDDQKDDQDKDDSDEDNV) shows a compositional bias: acidic residues. The span at 260–284 (TAITTTTTPITTTDSNIIGTTTTTD) shows a compositional bias: low complexity. The GATA-type zinc-finger motif lies at 304 to 331 (CYVCKVTETPYWRRGTDNGVVVDLCNEC).

In Dictyostelium discoideum (Social amoeba), this protein is GATA zinc finger domain-containing protein 17 (gtaQ).